The following is a 317-amino-acid chain: o-succinylbenzoate synthase (317 aa).

2-succinylbenzoate-binding positions include 71–73 and K95; that span reads NAT. K97 serves as the catalytic Proton donor. Mg(2+) contacts are provided by D128, E154, and D177. 2-succinylbenzoate is bound at residue 128-130; it reads DVN. K201 contributes to the 2-succinylbenzoate binding site. K201 (proton acceptor) is an active-site residue.

The protein belongs to the mandelate racemase/muconate lactonizing enzyme family. MenC type 1 subfamily. As to quaternary structure, monomer. It depends on a divalent metal cation as a cofactor.

It catalyses the reaction (1R,6R)-6-hydroxy-2-succinyl-cyclohexa-2,4-diene-1-carboxylate = 2-succinylbenzoate + H2O. It functions in the pathway quinol/quinone metabolism; 1,4-dihydroxy-2-naphthoate biosynthesis; 1,4-dihydroxy-2-naphthoate from chorismate: step 4/7. It participates in quinol/quinone metabolism; menaquinone biosynthesis. Converts 2-succinyl-6-hydroxy-2,4-cyclohexadiene-1-carboxylate (SHCHC) to 2-succinylbenzoate (OSB). Does not show N-succinylamino acid racemase (NSAR) activity with N-succinyl-L-phenylglycine as substrate. This is o-succinylbenzoate synthase from Thermobifida fusca (strain YX).